A 511-amino-acid chain; its full sequence is GATA zinc finger domain-containing protein 15 (511 aa).

A compositionally biased stretch (low complexity) spans 1-111 (TNNNNFNNIN…FNDNCNNNSN (111 aa)). Disordered regions lie at residues 1 to 194 (TNNN…NTFF), 214 to 313 (NVNN…NENK), and 325 to 355 (NLQY…VLSP). Residues 124-135 (SLQNINQYPLSP) show a composition bias toward polar residues. A compositionally biased stretch (low complexity) spans 136–166 (NNNKSSNQHLSHSSSNVNSQYYQTPYYQPSQ). Residues 167-185 (KQNSPNSTPPLNGCQYENH) are compositionally biased toward polar residues. 2 stretches are compositionally biased toward low complexity: residues 214-309 (NVNN…NNDN) and 337-351 (SGST…PTSP). The segment at 453-478 (CQACGTRASPEWRKGPDGFKSLCNAC) adopts a GATA-type zinc-finger fold.

The chain is GATA zinc finger domain-containing protein 15 (gtaO) from Dictyostelium discoideum (Social amoeba).